The chain runs to 615 residues: Chaperone protein DnaK (615 aa).

The residue at position 177 (Thr-177) is a Phosphothreonine; by autocatalysis. Residues Thr-567–Lys-615 form a disordered region. The segment covering Ala-581 to Thr-591 has biased composition (basic and acidic residues). Positions Glu-605–Lys-615 are enriched in acidic residues.

The protein belongs to the heat shock protein 70 family.

Its function is as follows. Acts as a chaperone. The sequence is that of Chaperone protein DnaK from Onion yellows phytoplasma (strain OY-M).